A 418-amino-acid chain; its full sequence is Magnesium transporter MRS2-E (418 aa).

The tract at residues 119–146 is disordered; it reads DAAPSTNPAAADRGNGTEQGDQGSVPGL. Positions 166–232 form a coiled coil; that stretch reads VCLEHACKDL…RDELEHLLDD (67 aa). Positions 258–268 are enriched in basic and acidic residues; the sequence is DSHKYASVDHD. The segment at 258–287 is disordered; that stretch reads DSHKYASVDHDDDREEEDHDDETESGRESS. Residues 269–280 show a composition bias toward acidic residues; the sequence is DDREEEDHDDET. A helical membrane pass occupies residues 344–364; the sequence is GVMLTTATVVVTAGIVVVSLF. The Required for magnesium transport activity motif lies at 365–367; the sequence is GMN. Residues 389-409 traverse the membrane as a helical segment; the sequence is FWETTFGTVAGCIAIYLLAIY.

The protein belongs to the CorA metal ion transporter (MIT) (TC 1.A.35.5) family.

The protein resides in the membrane. In terms of biological role, magnesium transporter that may mediate the influx of magnesium. The protein is Magnesium transporter MRS2-E (MRS2-E) of Oryza sativa subsp. indica (Rice).